Reading from the N-terminus, the 106-residue chain is Small ribosomal subunit protein uS17 (106 aa).

Belongs to the universal ribosomal protein uS17 family. As to quaternary structure, part of the 30S ribosomal subunit.

One of the primary rRNA binding proteins, it binds specifically to the 5'-end of 16S ribosomal RNA. This chain is Small ribosomal subunit protein uS17, found in Picrophilus torridus (strain ATCC 700027 / DSM 9790 / JCM 10055 / NBRC 100828 / KAW 2/3).